A 296-amino-acid polypeptide reads, in one-letter code: Tubulin polyglutamylase complex subunit 2 (296 aa).

A disordered region spans residues 257-296 (KILIPKKKGPVQPVSGQKGPGPLAPPTSKPSAGCGNPVRK).

As to quaternary structure, part of the neuronal tubulin polyglutamylase complex which contains TPGS1, TPGS2, TTLL1, LRRC49 and NICN1. Interacts with CSTPP1 and LRRC49.

The protein resides in the cytoplasm. Its subcellular location is the cytoskeleton. It is found in the microtubule organizing center. It localises to the centrosome. The protein localises to the centriolar satellite. Subunit of the tubulin polyglutamylase complex (TPGC). The complex mediates cilia and flagella polyglutamylation which is essential for their biogenesis and motility. The sequence is that of Tubulin polyglutamylase complex subunit 2 (Tpgs2) from Rattus norvegicus (Rat).